We begin with the raw amino-acid sequence, 469 residues long: 6-phosphofructo-2-kinase/fructose-2,6-bisphosphatase 4 (469 aa).

The 6-phosphofructo-2-kinase stretch occupies residues Met1–Pro249. An ATP-binding site is contributed by Gly46–Tyr54. Arg79 and Arg103 together coordinate beta-D-fructose 6-phosphate. The active site involves Asp129. Beta-D-fructose 6-phosphate is bound by residues Thr131 and Arg137. Cys159 is an active-site residue. An ATP-binding site is contributed by Asn168–Lys173. Residues Lys173, Arg194, and Tyr198 each coordinate beta-D-fructose 6-phosphate. Positions Arg250–Gln469 are fructose-2,6-bisphosphatase. Arg256 is a beta-D-fructose 2,6-bisphosphate binding site. His257 serves as the catalytic Tele-phosphohistidine intermediate. The beta-D-fructose 2,6-bisphosphate site is built by Asn263, Gly269, and Arg306. The Proton donor/acceptor role is filled by Glu326. The beta-D-fructose 2,6-bisphosphate site is built by Tyr337, Arg351, Lys355, Tyr366, Gln392, and Arg396. Phe348–Arg351 serves as a coordination point for ATP. Residues Gln392 to Arg396 and Tyr428 each bind ATP. Thr444 carries the post-translational modification Phosphothreonine; by PKC.

In the C-terminal section; belongs to the phosphoglycerate mutase family. In terms of assembly, homodimer.

The enzyme catalyses beta-D-fructose 2,6-bisphosphate + H2O = beta-D-fructose 6-phosphate + phosphate. It carries out the reaction beta-D-fructose 6-phosphate + ATP = beta-D-fructose 2,6-bisphosphate + ADP + H(+). With respect to regulation, the most important regulatory mechanism of these opposing activities is by phosphorylation and dephosphorylation of the enzyme. Synthesis and degradation of fructose 2,6-bisphosphate. The polypeptide is 6-phosphofructo-2-kinase/fructose-2,6-bisphosphatase 4 (PFKFB4) (Macaca fascicularis (Crab-eating macaque)).